Consider the following 388-residue polypeptide: MNLHEYQAKQLFAEYGLPVSTGYAVDTPEAAVEAAKKIGGNKWVVKAQVHAGGRGKAGGVKLVDSYEEVAAFTQNWLGKNLVTYQTDANGQPVAKILVESCTDIANELYLGAVVDRSTRRVVFMASTEGGVEIEKVAEETPELIHKAIIDPLVGAQPYQARELAFKLGLNPTQIKQFTKVFLGLSQMFHDYDFALLEINPLVITDEGNLHCLDGKIGIDSNAVYRQKKMQEFHDPSQEDEREAHAAKWELNYVALDGNVGCMVNGAGLAMGTMDIVNLHGGKPANFLDVGGGATKERVAEAFKIILSDSNVKAVLVNIFGGIVRCDMIAEGIIGAVEQVGVNVPVVVRLEGTNAEKGREVLANSGLDIIAATSLKDAAEQVVKAAEGK.

Residues 9 to 244 (KQLFAEYGLP…PSQEDEREAH (236 aa)) enclose the ATP-grasp domain. Residues Lys46, 53–55 (GRG), Glu99, Thr102, and Glu107 contribute to the ATP site. Positions 199 and 213 each coordinate Mg(2+). Residues Asn264 and 321–323 (GIV) contribute to the substrate site.

It belongs to the succinate/malate CoA ligase beta subunit family. Heterotetramer of two alpha and two beta subunits. Mg(2+) is required as a cofactor.

It catalyses the reaction succinate + ATP + CoA = succinyl-CoA + ADP + phosphate. It carries out the reaction GTP + succinate + CoA = succinyl-CoA + GDP + phosphate. It functions in the pathway carbohydrate metabolism; tricarboxylic acid cycle; succinate from succinyl-CoA (ligase route): step 1/1. Succinyl-CoA synthetase functions in the citric acid cycle (TCA), coupling the hydrolysis of succinyl-CoA to the synthesis of either ATP or GTP and thus represents the only step of substrate-level phosphorylation in the TCA. The beta subunit provides nucleotide specificity of the enzyme and binds the substrate succinate, while the binding sites for coenzyme A and phosphate are found in the alpha subunit. This chain is Succinate--CoA ligase [ADP-forming] subunit beta, found in Marinomonas sp. (strain MWYL1).